Reading from the N-terminus, the 100-residue chain is Small ribosomal subunit protein uS17 (100 aa).

It belongs to the universal ribosomal protein uS17 family. As to quaternary structure, part of the 30S ribosomal subunit.

Its function is as follows. One of the primary rRNA binding proteins, it binds specifically to the 5'-end of 16S ribosomal RNA. In Erythrobacter litoralis (strain HTCC2594), this protein is Small ribosomal subunit protein uS17.